The primary structure comprises 399 residues: Acetate kinase (399 aa).

Mg(2+) is bound at residue asparagine 10. Residue lysine 17 participates in ATP binding. Arginine 91 lines the substrate pocket. Aspartate 148 functions as the Proton donor/acceptor in the catalytic mechanism. ATP contacts are provided by residues 208-212, 283-285, and 331-335; these read HLGNG, DCR, and GIGEN. Glutamate 385 contributes to the Mg(2+) binding site.

It belongs to the acetokinase family. As to quaternary structure, homodimer. The cofactor is Mg(2+). It depends on Mn(2+) as a cofactor.

It is found in the cytoplasm. It catalyses the reaction acetate + ATP = acetyl phosphate + ADP. It functions in the pathway metabolic intermediate biosynthesis; acetyl-CoA biosynthesis; acetyl-CoA from acetate: step 1/2. Functionally, catalyzes the formation of acetyl phosphate from acetate and ATP. Can also catalyze the reverse reaction. This Shewanella amazonensis (strain ATCC BAA-1098 / SB2B) protein is Acetate kinase.